The chain runs to 108 residues: DNA-binding protein HBbu (108 aa).

Belongs to the bacterial histone-like protein family.

Histone-like DNA-binding protein which is capable of wrapping DNA to stabilize it, and thus to prevent its denaturation under extreme environmental conditions. The polypeptide is DNA-binding protein HBbu (hbb) (Borreliella japonica (Borrelia japonica)).